The chain runs to 213 residues: Orotate phosphoribosyltransferase (213 aa).

Residue Lys26 coordinates 5-phospho-alpha-D-ribose 1-diphosphate. An orotate-binding site is contributed by 34 to 35 (FF). 5-phospho-alpha-D-ribose 1-diphosphate contacts are provided by residues 72-73 (YK), Arg99, Lys100, Lys103, His105, and 124-132 (DDVITAGTA). Orotate contacts are provided by Thr128 and Arg156.

Belongs to the purine/pyrimidine phosphoribosyltransferase family. PyrE subfamily. Homodimer. It depends on Mg(2+) as a cofactor.

It catalyses the reaction orotidine 5'-phosphate + diphosphate = orotate + 5-phospho-alpha-D-ribose 1-diphosphate. Its pathway is pyrimidine metabolism; UMP biosynthesis via de novo pathway; UMP from orotate: step 1/2. Its function is as follows. Catalyzes the transfer of a ribosyl phosphate group from 5-phosphoribose 1-diphosphate to orotate, leading to the formation of orotidine monophosphate (OMP). The polypeptide is Orotate phosphoribosyltransferase (Pseudomonas putida (strain W619)).